The primary structure comprises 169 residues: Protein Flattop homolog (169 aa).

A disordered region spans residues 53–169 (IPRSSRSPWG…SPKLATPEPC (117 aa)). The segment covering 119 to 130 (VQASPRNASPLQ) has biased composition (polar residues).

It belongs to the Flattop family.

The protein resides in the cytoplasm. The protein localises to the cytoskeleton. It localises to the cilium basal body. It is found in the cell projection. Its subcellular location is the cilium. The protein resides in the apical cell membrane. Acts as a regulator of cilium basal body docking and positioning in mono- and multiciliated cells. The protein is Protein Flattop homolog of Nematostella vectensis (Starlet sea anemone).